Here is a 498-residue protein sequence, read N- to C-terminus: 4-aminobutyrate aminotransferase (498 aa).

Position 164 to 165 (164 to 165 (GS)) interacts with pyridoxal 5'-phosphate. A substrate-binding site is contributed by Arg222. N6-(pyridoxal phosphate)lysine is present on Lys356. Thr381 is a pyridoxal 5'-phosphate binding site.

This sequence belongs to the class-III pyridoxal-phosphate-dependent aminotransferase family. Homodimer. The cofactor is pyridoxal 5'-phosphate.

The protein localises to the cytoplasm. It carries out the reaction 4-aminobutanoate + 2-oxoglutarate = succinate semialdehyde + L-glutamate. Its function is as follows. Deaminates gamma-aminobutyric acid (GABA) to succinate-semialdehyde, which in turn is converted to succinate by the succinate semialdehyde dehydrogenase. Required for the degradation of GABA, which is important for utilization of GABA as nitrogen source. The chain is 4-aminobutyrate aminotransferase (gatA) from Emericella nidulans (strain FGSC A4 / ATCC 38163 / CBS 112.46 / NRRL 194 / M139) (Aspergillus nidulans).